A 661-amino-acid chain; its full sequence is UvrABC system protein B (661 aa).

The Helicase ATP-binding domain maps to D28–I414. G41–T48 is a binding site for ATP. Positions Y94–I117 match the Beta-hairpin motif. A Helicase C-terminal domain is found at Q432 to I598. Residues E603–R624 form a disordered region. Residues Q625 to E660 enclose the UVR domain.

Belongs to the UvrB family. As to quaternary structure, forms a heterotetramer with UvrA during the search for lesions. Interacts with UvrC in an incision complex.

It is found in the cytoplasm. Functionally, the UvrABC repair system catalyzes the recognition and processing of DNA lesions. A damage recognition complex composed of 2 UvrA and 2 UvrB subunits scans DNA for abnormalities. Upon binding of the UvrA(2)B(2) complex to a putative damaged site, the DNA wraps around one UvrB monomer. DNA wrap is dependent on ATP binding by UvrB and probably causes local melting of the DNA helix, facilitating insertion of UvrB beta-hairpin between the DNA strands. Then UvrB probes one DNA strand for the presence of a lesion. If a lesion is found the UvrA subunits dissociate and the UvrB-DNA preincision complex is formed. This complex is subsequently bound by UvrC and the second UvrB is released. If no lesion is found, the DNA wraps around the other UvrB subunit that will check the other stand for damage. In Staphylococcus epidermidis (strain ATCC 12228 / FDA PCI 1200), this protein is UvrABC system protein B.